The following is a 543-amino-acid chain: CTP synthase (543 aa).

Positions Met-1 to Leu-267 are amidoligase domain. Ser-15 is a CTP binding site. Ser-15 contacts UTP. ATP is bound by residues Ser-16–Ile-21 and Asp-73. Mg(2+) contacts are provided by Asp-73 and Glu-141. CTP contacts are provided by residues Asp-148–Glu-150, Lys-188–Gln-193, and Lys-224. UTP is bound by residues Lys-188–Gln-193 and Lys-224. Residues Lys-292–Asn-543 form the Glutamine amidotransferase type-1 domain. Gly-354 contacts L-glutamine. The Nucleophile; for glutamine hydrolysis role is filled by Cys-381. Residues Leu-382 to Gln-385, Glu-405, and Arg-473 contribute to the L-glutamine site. Active-site residues include His-516 and Glu-518.

Belongs to the CTP synthase family. Homotetramer.

The enzyme catalyses UTP + L-glutamine + ATP + H2O = CTP + L-glutamate + ADP + phosphate + 2 H(+). The catalysed reaction is L-glutamine + H2O = L-glutamate + NH4(+). It catalyses the reaction UTP + NH4(+) + ATP = CTP + ADP + phosphate + 2 H(+). It participates in pyrimidine metabolism; CTP biosynthesis via de novo pathway; CTP from UDP: step 2/2. Its activity is regulated as follows. Allosterically activated by GTP, when glutamine is the substrate; GTP has no effect on the reaction when ammonia is the substrate. The allosteric effector GTP functions by stabilizing the protein conformation that binds the tetrahedral intermediate(s) formed during glutamine hydrolysis. Inhibited by the product CTP, via allosteric rather than competitive inhibition. Catalyzes the ATP-dependent amination of UTP to CTP with either L-glutamine or ammonia as the source of nitrogen. Regulates intracellular CTP levels through interactions with the four ribonucleotide triphosphates. The protein is CTP synthase of Campylobacter jejuni subsp. jejuni serotype O:2 (strain ATCC 700819 / NCTC 11168).